The sequence spans 80 residues: EMBRYO SURROUNDING FACTOR 1-like protein 1 (80 aa).

An N-terminal signal peptide occupies residues 1–22 (MKSSHIALLCIVVLSLFALHEC). Cystine bridges form between Cys38-Cys52, Cys43-Cys78, Cys50-Cys74, and Cys53-Cys64.

It belongs to the MEG family. As to expression, expressed in leaves.

This chain is EMBRYO SURROUNDING FACTOR 1-like protein 1 (ESFL1), found in Arabidopsis thaliana (Mouse-ear cress).